A 20-amino-acid chain; its full sequence is Apidaecin 2+ (20 aa).

Residues 1–13 (GKPNKPRPAPIKP) are compositionally biased toward pro residues. The disordered stretch occupies residues 1–20 (GKPNKPRPAPIKPRPPHPRL).

The protein localises to the secreted. In terms of biological role, antimicrobial peptide active against many Gram-negative enterobacterial and plant-associated bacterial species. Not active against other bacterial species like H.pylori, P.mirabilis, B.pertussis or N.gonorrhoeae. This chain is Apidaecin 2+, found in Pimpla disparis (Parasitic wasp).